Consider the following 312-residue polypeptide: Malate dehydrogenase (312 aa).

NAD(+) contacts are provided by residues 7–13 (GAAGGIG) and D34. Residues R81 and R87 each coordinate substrate. Residues N94 and 117–119 (ITN) contribute to the NAD(+) site. Residues N119 and R153 each contribute to the substrate site. H177 functions as the Proton acceptor in the catalytic mechanism. M227 contributes to the NAD(+) binding site.

It belongs to the LDH/MDH superfamily. MDH type 1 family. In terms of assembly, homodimer.

The catalysed reaction is (S)-malate + NAD(+) = oxaloacetate + NADH + H(+). Its function is as follows. Catalyzes the reversible oxidation of malate to oxaloacetate. The protein is Malate dehydrogenase of Salmonella newport (strain SL254).